Reading from the N-terminus, the 238-residue chain is Urease accessory protein UreG (238 aa).

Residues 1–15 (MPPHLIDGEPHDHAH) are compositionally biased toward basic and acidic residues. Positions 1-27 (MPPHLIDGEPHDHAHDRPKRQRTPGEP) are disordered. 34 to 41 (GPVGSGKT) contacts GTP.

This sequence belongs to the SIMIBI class G3E GTPase family. UreG subfamily. As to quaternary structure, homodimer. UreD, UreF and UreG form a complex that acts as a GTP-hydrolysis-dependent molecular chaperone, activating the urease apoprotein by helping to assemble the nickel containing metallocenter of UreC. The UreE protein probably delivers the nickel.

Its subcellular location is the cytoplasm. Its function is as follows. Facilitates the functional incorporation of the urease nickel metallocenter. This process requires GTP hydrolysis, probably effectuated by UreG. This Nocardia farcinica (strain IFM 10152) protein is Urease accessory protein UreG.